Here is a 108-residue protein sequence, read N- to C-terminus: Nucleoid-associated protein BP1550 (108 aa).

The disordered stretch occupies residues 87–108; the sequence is SQEKMASVTAGMPLPPGMKLPF. Residues 99–108 show a composition bias toward pro residues; that stretch reads PLPPGMKLPF.

This sequence belongs to the YbaB/EbfC family. Homodimer.

The protein localises to the cytoplasm. The protein resides in the nucleoid. Functionally, binds to DNA and alters its conformation. May be involved in regulation of gene expression, nucleoid organization and DNA protection. The sequence is that of Nucleoid-associated protein BP1550 from Bordetella pertussis (strain Tohama I / ATCC BAA-589 / NCTC 13251).